The sequence spans 155 residues: uncharacterized protein (155 aa).

An N-terminal signal peptide occupies residues Met-1–Ala-23.

The protein to E.coli YkfB.

This is an uncharacterized protein from Escherichia coli (strain K12).